Reading from the N-terminus, the 717-residue chain is Cell division cycle protein 27 homolog A (717 aa).

A compositionally biased stretch (polar residues) spans 198–208 (TEHIPGENQQD). 3 disordered regions span residues 198–217 (TEHI…QPGD), 282–315 (LSAE…KDSH), and 342–374 (SKEA…SPDR). A compositionally biased stretch (basic residues) spans 293–304 (RRSARIAARKKN). Positions 342–356 (SKEATTSGQSVSDIG) are enriched in polar residues. 7 TPR repeats span residues 421 to 454 (HWVL…YPYA), 489 to 522 (PESW…NERF), 524 to 556 (YAHT…DTRH), 557 to 590 (YNAW…NPRS), 592 to 624 (VIMC…DAKN), 625 to 658 (PLPK…APQE), and 659 to 692 (SSVH…SPSP).

The protein belongs to the APC3/CDC27 family. As to quaternary structure, the APC/C is composed of at least 10 subunits. Interacts with APC2 and APC10.

The protein localises to the nucleus. The protein operates within protein modification; protein ubiquitination. Functionally, component of the anaphase promoting complex/cyclosome (APC/C), a cell cycle-regulated E3 ubiquitin-protein ligase complex that controls progression through mitosis and the G1 phase of the cell cycle. The APC/C complex controls several key steps in the cell cycle by mediating ubiquitination and subsequent degradation of target proteins such as cyclins. The APC/C complex is required for the female gametophyte development and is involved in several aspect of development by controlling cell division and cell elongation. Involved in the control of endoreduplication. Functionally redundant with CDC27B in the control of gametophyte development. The sequence is that of Cell division cycle protein 27 homolog A (CDC27A) from Arabidopsis thaliana (Mouse-ear cress).